Consider the following 266-residue polypeptide: Ribonuclease 3 (266 aa).

The tract at residues 1–35 is disordered; that stretch reads MMDESADIKPVPTSEDVAAPSGTEPVAPAPKKKRA. The 129-residue stretch at 43-171 folds into the RNase III domain; that stretch reads MAAIEQRLGH…VIGAVYLDGG (129 aa). Glu84 contacts Mg(2+). Asp88 is an active-site residue. Residues Asp157 and Glu160 each contribute to the Mg(2+) site. Glu160 is a catalytic residue. The DRBM domain maps to 196–265; that stretch reads DPKTVLQEWA…ASAMIVREGV (70 aa).

Belongs to the ribonuclease III family. As to quaternary structure, homodimer. It depends on Mg(2+) as a cofactor.

The protein resides in the cytoplasm. It carries out the reaction Endonucleolytic cleavage to 5'-phosphomonoester.. Functionally, digests double-stranded RNA. Involved in the processing of primary rRNA transcript to yield the immediate precursors to the large and small rRNAs (23S and 16S). Processes some mRNAs, and tRNAs when they are encoded in the rRNA operon. Processes pre-crRNA and tracrRNA of type II CRISPR loci if present in the organism. The sequence is that of Ribonuclease 3 from Nitrobacter winogradskyi (strain ATCC 25391 / DSM 10237 / CIP 104748 / NCIMB 11846 / Nb-255).